Here is a 366-residue protein sequence, read N- to C-terminus: Probable S-adenosyl-L-methionine-binding protein AF_0433 (366 aa).

The 131-residue stretch at 6-136 folds into the TsaA-like domain; sequence LRQVGVIRSP…YSSTIDSVGN (131 aa). S-adenosyl-L-methionine contacts are provided by residues 23–25, 61–62, Arg-85, and 116–119; these read PHQ, DR, and LDGT.

The protein belongs to the tRNA methyltransferase O family.

The protein is Probable S-adenosyl-L-methionine-binding protein AF_0433 of Archaeoglobus fulgidus (strain ATCC 49558 / DSM 4304 / JCM 9628 / NBRC 100126 / VC-16).